The following is a 147-amino-acid chain: CRISP-1 (147 aa).

Belongs to the CRISP family. As to expression, expressed by the venom gland.

The protein localises to the secreted. The polypeptide is CRISP-1 (Phoneutria keyserlingi (Brazilian wandering spider)).